We begin with the raw amino-acid sequence, 879 residues long: Putative ankyrin repeat protein L88 (879 aa).

ANK repeat units lie at residues 22–62, 63–96, 100–133, 137–170, 174–207, 211–241, 245–278, 282–313, 317–347, 351–384, 387–420, 424–463, 470–499, 506–542, 546–578, 674–704, and 708–738; these read KGFT…QKNK, KGYTALSIAVRNCGNWCSYKTVRILLEKGAKTNI, EGITPLIFASFNSRFCEGFNVINLLLKYGADINA, NGYTALMNASSNSNSSSTYTTVKLLLDNDANIDD, NGLTCLMHACNNVTLKSSIGTIELLLYYGADINA, NGRTALMHACDNSNNIELIELLLNRGADIEA, KGLTCLMIASKYAGSINSVEVVEILINRGANIEA, KLRTPLMYACKYSHNNTSVIKLLLDKGANIET, RNNTALILASTYSSSVEPIKLLLDKGANINH, EGCNALNLACINSSYNNNSEIVKLLIDRGSNINN, SERTILTSTCEFIGKGSNIDTVKILLDNNADPNI, NGNTTLLYMCKKYIKDGPKKRDLNFNVIKLLLDYKANPNF, NSLTRLSKYSDKVDIEIIKLLLDYGVDINS, SALLLFCMDLQNSCTKISYNCKNIVKLLLEKGADVNI, NGNTALSIICESDDNNLSDIIELLLAHNANPNT, SGITALLHECQVSDNIEPIKLLLDNGADPNI, and KGETALHKAVRHTNKIDVIKLLMDYHANPYI.

The chain is Putative ankyrin repeat protein L88 from Acanthamoeba polyphaga mimivirus (APMV).